The sequence spans 236 residues: Protein EVI2A (236 aa).

Residues 1–30 (MPTDMEHTGHYLHLAFLMTTVFSLSPGTKA) form the signal peptide. Asn-31, Asn-38, Asn-49, Asn-73, and Asn-112 each carry an N-linked (GlcNAc...) asparagine glycan. Residues 31-133 (NYTRLWANST…DVCAENNNNM (103 aa)) are Extracellular-facing. The helical transmembrane segment at 134–154 (AMLICLIIIAVLFLICTFLFL) threads the bilayer. At 155-236 (STVVLANKVS…TEKLTNKQIG (82 aa)) the chain is on the cytoplasmic side. Ser-211 is modified (phosphoserine). Residues 217–236 (ATRERKDEEGTEKLTNKQIG) are disordered. Over residues 218 to 236 (TRERKDEEGTEKLTNKQIG) the composition is skewed to basic and acidic residues.

This sequence belongs to the EVI2A family.

The protein resides in the membrane. Its function is as follows. May complex with itself or/and other proteins within the membrane, to function as part of a cell-surface receptor. This chain is Protein EVI2A (EVI2A), found in Homo sapiens (Human).